Reading from the N-terminus, the 88-residue chain is Pape peptide (88 aa).

Residues 1–22 (MNRKTLLVIFFVTLLIAEEVNS) form the signal peptide. A propeptide spanning residues 23-45 (FRLGGFLKKIWRSKLVKRLRSKG) is cleaved from the precursor. Residues 49–88 (LKEALAPEPAPEPAPEPAPEAAPEAAPEPAAAAPERRRRR) are disordered. Pro residues predominate over residues 56-68 (EPAPEPAPEPAPE). PAPE repeat units lie at residues 57–60 (PAPE), 61–64 (PAPE), and 65–68 (PAPE). Residues 69 to 81 (AAPEAAPEPAAAA) are compositionally biased toward low complexity.

As to expression, expressed by the venom gland.

It is found in the secreted. This is Pape peptide from Tityus serrulatus (Brazilian scorpion).